Reading from the N-terminus, the 222-residue chain is UPF0758 protein Lcho_0695 (222 aa).

The region spanning 100–222 (VFDSPQAVRD…VVSFAERGLL (123 aa)) is the MPN domain. 3 residues coordinate Zn(2+): histidine 171, histidine 173, and aspartate 184. A JAMM motif motif is present at residues 171 to 184 (HNHPSGVAEPSRAD).

It belongs to the UPF0758 family.

This chain is UPF0758 protein Lcho_0695, found in Leptothrix cholodnii (strain ATCC 51168 / LMG 8142 / SP-6) (Leptothrix discophora (strain SP-6)).